A 506-amino-acid chain; its full sequence is 2-isopropylmalate synthase (506 aa).

One can recognise a Pyruvate carboxyltransferase domain in the interval 4–266; the sequence is ILFMDTTLRD…QSSIILKEIK (263 aa). Residues aspartate 13, histidine 201, histidine 203, and asparagine 237 each contribute to the Mn(2+) site. Residues 390–506 form a regulatory domain region; the sequence is NIKQLQVHFV…KLKALLTLVK (117 aa).

The protein belongs to the alpha-IPM synthase/homocitrate synthase family. LeuA type 1 subfamily. As to quaternary structure, homodimer. It depends on Mn(2+) as a cofactor.

Its subcellular location is the cytoplasm. The catalysed reaction is 3-methyl-2-oxobutanoate + acetyl-CoA + H2O = (2S)-2-isopropylmalate + CoA + H(+). Its pathway is amino-acid biosynthesis; L-leucine biosynthesis; L-leucine from 3-methyl-2-oxobutanoate: step 1/4. Its function is as follows. Catalyzes the condensation of the acetyl group of acetyl-CoA with 3-methyl-2-oxobutanoate (2-ketoisovalerate) to form 3-carboxy-3-hydroxy-4-methylpentanoate (2-isopropylmalate). The protein is 2-isopropylmalate synthase of Bacillus cytotoxicus (strain DSM 22905 / CIP 110041 / 391-98 / NVH 391-98).